A 236-amino-acid chain; its full sequence is Peptidase E (236 aa).

Active-site charge relay system residues include Ser-122, Asp-137, and His-159.

The protein belongs to the peptidase S51 family.

Its subcellular location is the cytoplasm. The enzyme catalyses Dipeptidase E catalyzes the hydrolysis of dipeptides Asp-|-Xaa. It does not act on peptides with N-terminal Glu, Asn or Gln, nor does it cleave isoaspartyl peptides.. In terms of biological role, hydrolyzes dipeptides containing N-terminal aspartate residues. May play a role in allowing the cell to use peptide aspartate to spare carbon otherwise required for the synthesis of the aspartate family of amino acids. This chain is Peptidase E, found in Shewanella sp. (strain ANA-3).